The primary structure comprises 363 residues: S-adenosylmethionine:tRNA ribosyltransferase-isomerase (363 aa).

It belongs to the QueA family. As to quaternary structure, monomer.

Its subcellular location is the cytoplasm. It catalyses the reaction 7-aminomethyl-7-carbaguanosine(34) in tRNA + S-adenosyl-L-methionine = epoxyqueuosine(34) in tRNA + adenine + L-methionine + 2 H(+). It functions in the pathway tRNA modification; tRNA-queuosine biosynthesis. Its function is as follows. Transfers and isomerizes the ribose moiety from AdoMet to the 7-aminomethyl group of 7-deazaguanine (preQ1-tRNA) to give epoxyqueuosine (oQ-tRNA). The polypeptide is S-adenosylmethionine:tRNA ribosyltransferase-isomerase (Brucella melitensis biotype 2 (strain ATCC 23457)).